The chain runs to 530 residues: Probable 1,4-beta-D-glucan cellobiohydrolase B (530 aa).

Positions M1 to A26 are cleaved as a signal peptide. The catalytic stretch occupies residues Q27–S461. The Nucleophile role is filled by E238. E243 (proton donor) is an active-site residue. N-linked (GlcNAc...) asparagine glycosylation is present at N296. The segment at T462 to G492 is disordered. A ser/Thr-rich linker region spans residues T462–G494. Over residues T475–G488 the composition is skewed to low complexity. A CBM1 domain is found at G494–L530. 2 disulfides stabilise this stretch: C502–C519 and C513–C529.

Belongs to the glycosyl hydrolase 7 (cellulase C) family.

Its subcellular location is the secreted. The catalysed reaction is Hydrolysis of (1-&gt;4)-beta-D-glucosidic linkages in cellulose and cellotetraose, releasing cellobiose from the non-reducing ends of the chains.. Its function is as follows. The biological conversion of cellulose to glucose generally requires three types of hydrolytic enzymes: (1) Endoglucanases which cut internal beta-1,4-glucosidic bonds; (2) Exocellobiohydrolases that cut the disaccharide cellobiose from the non-reducing end of the cellulose polymer chain; (3) Beta-1,4-glucosidases which hydrolyze the cellobiose and other short cello-oligosaccharides to glucose. In Neosartorya fischeri (strain ATCC 1020 / DSM 3700 / CBS 544.65 / FGSC A1164 / JCM 1740 / NRRL 181 / WB 181) (Aspergillus fischerianus), this protein is Probable 1,4-beta-D-glucan cellobiohydrolase B (cbhB).